Reading from the N-terminus, the 635-residue chain is Protein OPG056 (635 aa).

Belongs to the orthopoxvirus OPG056 family. In terms of assembly, interacts with protein OPG164/A36. Interacts with protein OPG064/E2.

The protein localises to the virion membrane. It is found in the host endosome. Its function is as follows. Plays a role in intracellular enveloped virus (IEV) transport to the cell surface through microtubule transport. Together with protein OPG064/E2, forms a complex that interacts with host KLC2 (kinesin light chain isoform 2) to engage the kinesin-1 complex and thereby promote IEV trafficking. In Vaccinia virus (strain Western Reserve) (VACV), this protein is Protein OPG056 (OPG056).